A 383-amino-acid chain; its full sequence is 2-methylcitrate synthase 2 (383 aa).

Arginine 73 and histidine 195 together coordinate substrate. Histidine 230 is an active-site residue. CoA is bound at residue 263 to 267; the sequence is VVMGF. The active site involves histidine 269. A substrate-binding site is contributed by arginine 278. Residue aspartate 320 is part of the active site. Substrate-binding residues include arginine 345 and arginine 364.

Belongs to the citrate synthase family. In terms of assembly, homodimer.

The catalysed reaction is propanoyl-CoA + oxaloacetate + H2O = (2S,3S)-2-methylcitrate + CoA + H(+). The enzyme catalyses oxaloacetate + acetyl-CoA + H2O = citrate + CoA + H(+). It participates in organic acid metabolism; propanoate degradation. It functions in the pathway carbohydrate metabolism; tricarboxylic acid cycle; isocitrate from oxaloacetate: step 1/2. Involved in the catabolism of short chain fatty acids (SCFA) via the tricarboxylic acid (TCA)(acetyl degradation route) and via the 2-methylcitrate cycle I (propionate degradation route). Catalyzes the Claisen condensation of propionyl-CoA and oxaloacetate (OAA) to yield 2-methylcitrate (2-MC) and CoA. Also catalyzes the condensation of oxaloacetate with acetyl-CoA but with a lower specificity. The polypeptide is 2-methylcitrate synthase 2 (prpC2) (Corynebacterium glutamicum (strain ATCC 13032 / DSM 20300 / JCM 1318 / BCRC 11384 / CCUG 27702 / LMG 3730 / NBRC 12168 / NCIMB 10025 / NRRL B-2784 / 534)).